We begin with the raw amino-acid sequence, 227 residues long: ATP-dependent dethiobiotin synthetase BioD (227 aa).

Aspartate 13–tyrosine 18 provides a ligand contact to ATP. Threonine 17 provides a ligand contact to Mg(2+). Residue lysine 38 is part of the active site. Serine 42 is a binding site for substrate. ATP-binding positions include aspartate 55, glutamate 116 to glycine 119, and asparagine 179 to asparagine 180. Aspartate 55 and glutamate 116 together coordinate Mg(2+).

This sequence belongs to the dethiobiotin synthetase family. Homodimer. The cofactor is Mg(2+).

The protein localises to the cytoplasm. It carries out the reaction (7R,8S)-7,8-diammoniononanoate + CO2 + ATP = (4R,5S)-dethiobiotin + ADP + phosphate + 3 H(+). It participates in cofactor biosynthesis; biotin biosynthesis; biotin from 7,8-diaminononanoate: step 1/2. In terms of biological role, catalyzes a mechanistically unusual reaction, the ATP-dependent insertion of CO2 between the N7 and N8 nitrogen atoms of 7,8-diaminopelargonic acid (DAPA, also called 7,8-diammoniononanoate) to form a ureido ring. The polypeptide is ATP-dependent dethiobiotin synthetase BioD (Clostridium botulinum (strain Loch Maree / Type A3)).